The following is a 245-amino-acid chain: Pathogenesis-related thaumatin-like protein 3.6 (245 aa).

The N-terminal stretch at 1 to 19 (GSIPFWIALIASFSVFLQG) is a signal peptide. 8 disulfides stabilise this stretch: Cys33–Cys226, Cys74–Cys84, Cys89–Cys95, Cys142–Cys215, Cys148–Cys198, Cys156–Cys166, Cys170–Cys179, and Cys180–Cys185. Residue Asn90 is glycosylated (N-linked (GlcNAc...) asparagine). A glycan (N-linked (GlcNAc...) asparagine) is linked at Asn186.

It belongs to the thaumatin family. Mostly expressed in strobili, and, to a lower extent, in roots of seedlings and saplings.

May be involved in disease resistance. The sequence is that of Pathogenesis-related thaumatin-like protein 3.6 from Cryptomeria japonica (Japanese cedar).